Here is a 144-residue protein sequence, read N- to C-terminus: Transcriptional regulator SlyA (144 aa).

In terms of domain architecture, HTH marR-type spans 2–135; sequence ESPLGSDLAR…LNKIISKLEK (134 aa). Residues 49–72 constitute a DNA-binding region (H-T-H motif); sequence QIQLAKAIGIEQPSLVRTLDQLEE.

Belongs to the SlyA family. In terms of assembly, homodimer.

Transcription regulator that can specifically activate or repress expression of target genes. In Blochmanniella pennsylvanica (strain BPEN), this protein is Transcriptional regulator SlyA.